The chain runs to 440 residues: Ribulose bisphosphate carboxylase large chain (440 aa).

Lysine 4 carries the post-translational modification N6,N6,N6-trimethyllysine. Substrate-binding residues include asparagine 113 and threonine 163. Lysine 165 functions as the Proton acceptor in the catalytic mechanism. Position 167 (lysine 167) interacts with substrate. Lysine 191, aspartate 193, and glutamate 194 together coordinate Mg(2+). Lysine 191 is modified (N6-carboxylysine). Residue histidine 284 is the Proton acceptor of the active site. Arginine 285, histidine 317, and serine 369 together coordinate substrate.

Belongs to the RuBisCO large chain family. Type I subfamily. In terms of assembly, heterohexadecamer of 8 large chains and 8 small chains; disulfide-linked. The disulfide link is formed within the large subunit homodimers. Requires Mg(2+) as cofactor. In terms of processing, the disulfide bond which can form in the large chain dimeric partners within the hexadecamer appears to be associated with oxidative stress and protein turnover.

The protein resides in the plastid. It is found in the chloroplast. The catalysed reaction is 2 (2R)-3-phosphoglycerate + 2 H(+) = D-ribulose 1,5-bisphosphate + CO2 + H2O. It catalyses the reaction D-ribulose 1,5-bisphosphate + O2 = 2-phosphoglycolate + (2R)-3-phosphoglycerate + 2 H(+). Functionally, ruBisCO catalyzes two reactions: the carboxylation of D-ribulose 1,5-bisphosphate, the primary event in carbon dioxide fixation, as well as the oxidative fragmentation of the pentose substrate in the photorespiration process. Both reactions occur simultaneously and in competition at the same active site. The chain is Ribulose bisphosphate carboxylase large chain from Matteuccia struthiopteris (European ostrich fern).